Reading from the N-terminus, the 463-residue chain is ATP-dependent protease ATPase subunit HslU (463 aa).

Residues I19 and 61-66 (GVGKTE) each bind ATP. The tract at residues 154–174 (FGGAQNSSQTSDTQEDGEIEK) is disordered. Positions 277, 341, and 413 each coordinate ATP.

The protein belongs to the ClpX chaperone family. HslU subfamily. A double ring-shaped homohexamer of HslV is capped on each side by a ring-shaped HslU homohexamer. The assembly of the HslU/HslV complex is dependent on binding of ATP.

It localises to the cytoplasm. Functionally, ATPase subunit of a proteasome-like degradation complex; this subunit has chaperone activity. The binding of ATP and its subsequent hydrolysis by HslU are essential for unfolding of protein substrates subsequently hydrolyzed by HslV. HslU recognizes the N-terminal part of its protein substrates and unfolds these before they are guided to HslV for hydrolysis. This Bacillus cereus (strain G9842) protein is ATP-dependent protease ATPase subunit HslU.